The sequence spans 197 residues: Putative RNA polymerase II subunit B1 CTD phosphatase rtr1 (197 aa).

The RTR1-type zinc finger occupies 60–139; it reads EARKYLRKSD…LSDEPLWIRE (80 aa). Cys-83, Cys-88, Cys-115, and Cys-119 together coordinate Zn(2+).

Belongs to the RPAP2 family.

The protein resides in the cytoplasm. Its subcellular location is the nucleus. The enzyme catalyses O-phospho-L-seryl-[protein] + H2O = L-seryl-[protein] + phosphate. The catalysed reaction is O-phospho-L-threonyl-[protein] + H2O = L-threonyl-[protein] + phosphate. Its function is as follows. Putative RNA polymerase II subunit B1 C-terminal domain (CTD) phosphatase involved in RNA polymerase II transcription regulation. The protein is Putative RNA polymerase II subunit B1 CTD phosphatase rtr1 of Schizosaccharomyces pombe (strain 972 / ATCC 24843) (Fission yeast).